We begin with the raw amino-acid sequence, 101 residues long: DNA-binding protein Fis (101 aa).

The segment at residues glutamine 77–lysine 96 is a DNA-binding region (H-T-H motif).

The protein belongs to the transcriptional regulatory Fis family. As to quaternary structure, homodimer.

Its function is as follows. Activates ribosomal RNA transcription. Plays a direct role in upstream activation of rRNA promoters. The chain is DNA-binding protein Fis from Shewanella loihica (strain ATCC BAA-1088 / PV-4).